Here is a 172-residue protein sequence, read N- to C-terminus: Low molecular mass early light-inducible protein HV90, chloroplastic (172 aa).

Residues 1–38 constitute a chloroplast transit peptide; the sequence is MATMMSMSSFAGAAVVPRSSASSFGARSLPALGRRALV. Transmembrane regions (helical) follow at residues 106–126 and 150–170; these read GQAWFAYTVAVLSMASLVPLL and FAMLGLVALAATEIITGAPFI.

The protein belongs to the ELIP/psbS family.

It is found in the plastid. The protein resides in the chloroplast membrane. Probably involved in the integration of pigments into the mature pigment-protein complexes. The polypeptide is Low molecular mass early light-inducible protein HV90, chloroplastic (Hordeum vulgare (Barley)).